Reading from the N-terminus, the 306-residue chain is Ornithine carbamoyltransferase (306 aa).

Residues 53–56, Gln-80, Arg-104, and 131–134 contribute to the carbamoyl phosphate site; these read STRT and HPCQ. Residues Asn-162, Asp-219, and 223–224 contribute to the L-ornithine site; that span reads SM. Residues 259-260 and Arg-287 each bind carbamoyl phosphate; that span reads CL.

Belongs to the aspartate/ornithine carbamoyltransferase superfamily. OTCase family.

It is found in the cytoplasm. The catalysed reaction is carbamoyl phosphate + L-ornithine = L-citrulline + phosphate + H(+). It participates in amino-acid degradation; L-arginine degradation via ADI pathway; carbamoyl phosphate from L-arginine: step 2/2. Functionally, reversibly catalyzes the transfer of the carbamoyl group from carbamoyl phosphate (CP) to the N(epsilon) atom of ornithine (ORN) to produce L-citrulline. The chain is Ornithine carbamoyltransferase from Acinetobacter baumannii (strain AYE).